The sequence spans 433 residues: 23S rRNA (uracil(1939)-C(5))-methyltransferase RlmD (433 aa).

Residues 10–68 (RTTTRQIITVSVNDLDSFGQGVARHNGKTLFIPGLLPQENAEVTVTEDKKQYARAKVVR) enclose the TRAM domain. Cys-81, Cys-87, Cys-90, and Cys-162 together coordinate [4Fe-4S] cluster. 6 residues coordinate S-adenosyl-L-methionine: Gln-265, Phe-294, Asn-299, Glu-315, Asn-342, and Asp-363. The Nucleophile role is filled by Cys-389.

Belongs to the class I-like SAM-binding methyltransferase superfamily. RNA M5U methyltransferase family. RlmD subfamily.

The enzyme catalyses uridine(1939) in 23S rRNA + S-adenosyl-L-methionine = 5-methyluridine(1939) in 23S rRNA + S-adenosyl-L-homocysteine + H(+). In terms of biological role, catalyzes the formation of 5-methyl-uridine at position 1939 (m5U1939) in 23S rRNA. This Escherichia coli (strain UTI89 / UPEC) protein is 23S rRNA (uracil(1939)-C(5))-methyltransferase RlmD.